Here is a 196-residue protein sequence, read N- to C-terminus: Orotate phosphoribosyltransferase (196 aa).

Residue 117-125 coordinates 5-phospho-alpha-D-ribose 1-diphosphate; it reads EDIVTTGLS. Orotate-binding residues include threonine 121 and arginine 149.

Belongs to the purine/pyrimidine phosphoribosyltransferase family. PyrE subfamily. Homodimer. Mg(2+) serves as cofactor.

It catalyses the reaction orotidine 5'-phosphate + diphosphate = orotate + 5-phospho-alpha-D-ribose 1-diphosphate. Its pathway is pyrimidine metabolism; UMP biosynthesis via de novo pathway; UMP from orotate: step 1/2. Functionally, catalyzes the transfer of a ribosyl phosphate group from 5-phosphoribose 1-diphosphate to orotate, leading to the formation of orotidine monophosphate (OMP). The chain is Orotate phosphoribosyltransferase from Methylobacterium sp. (strain 4-46).